A 453-amino-acid polypeptide reads, in one-letter code: Probable exopolygalacturonase B (453 aa).

The signal sequence occupies residues 1–16; that stretch reads MKFLALAALFASTVSS. N-linked (GlcNAc...) asparagine glycosylation is found at Asn-185 and Asn-225. The active-site Proton donor is the Asp-255. A disulfide bond links Cys-257 and Cys-274. Residues Asn-263 and Asn-275 are each glycosylated (N-linked (GlcNAc...) asparagine). The active site involves His-278. PbH1 repeat units lie at residues 295 to 316 and 327 to 348; these read IENVWIENVTLLNGENGARLKA and INNVTYKNIHVENTDNPIVLDQ. 4 N-linked (GlcNAc...) asparagine glycosylation sites follow: Asn-302, Asn-329, Asn-354, and Asn-366. A PbH1 3 repeat occupies 362–405; sequence PSRVNFTNIVFENIYGTSSGKHGKVVADLTCSPNAVCSGIRLKN. The cysteines at positions 392 and 398 are disulfide-linked. A glycan (N-linked (GlcNAc...) asparagine) is linked at Asn-436.

Belongs to the glycosyl hydrolase 28 family.

The protein localises to the secreted. It catalyses the reaction [(1-&gt;4)-alpha-D-galacturonosyl](n) + H2O = alpha-D-galacturonate + [(1-&gt;4)-alpha-D-galacturonosyl](n-1). In terms of biological role, specific in hydrolyzing the terminal glycosidic bond of polygalacturonic acid and oligogalacturonates. This is Probable exopolygalacturonase B (pgxB) from Neosartorya fischeri (strain ATCC 1020 / DSM 3700 / CBS 544.65 / FGSC A1164 / JCM 1740 / NRRL 181 / WB 181) (Aspergillus fischerianus).